A 461-amino-acid chain; its full sequence is UPF0053 protein YhdT (461 aa).

The CNNM transmembrane domain occupies 1 to 202 (MDDIDSLILI…LKNGEINPSE (202 aa)). Helical transmembrane passes span 8 to 28 (ILIGVLIALTAFFVASEFAIV), 103 to 123 (VSFAVAYGLITFLHVVVGELA), and 137 to 157 (LLIAGPLRLFYLLLFPFIWIL). CBS domains lie at 221-280 (MIPR…MTEE) and 290-347 (YVRP…IRDE).

This sequence belongs to the UPF0053 family.

Its subcellular location is the cell membrane. The protein is UPF0053 protein YhdT (yhdT) of Bacillus subtilis (strain 168).